Here is a 493-residue protein sequence, read N- to C-terminus: Envelope glycoprotein gp63 (493 aa).

The first 22 residues, 1 to 22, serve as a signal peptide directing secretion; it reads MGKSGLYFSLICFYTLFPSSFG. The Extracellular segment spans residues 23–446; the sequence is NPSRCTLFIG…GLSQWAREAL (424 aa). N-linked (GlcNAc...) asparagine; by host glycosylation is found at asparagine 140 and asparagine 222. The CXXC signature appears at 225–228; sequence CMVC. Intrachain disulfides connect cysteine 225/cysteine 228, cysteine 225/cysteine 404, and cysteine 396/cysteine 403. Asparagine 292 is a glycosylation site (N-linked (GlcNAc...) asparagine; by host). Positions 316-336 are fusion peptide; sequence AVPIAIWLVSALAAGTGIAGG. 2 coiled-coil regions span residues 344–390 and 400–432; these read ASSK…LLFW and QEQC…GWGL. An immunosuppression region spans residues 379 to 395; that stretch reads AQNRRGLDLLFWEQGGL. The CX6CC signature appears at 396–404; it reads CKAIQEQCC. Asparagine 407 carries an N-linked (GlcNAc...) asparagine; by host glycan. A helical membrane pass occupies residues 447 to 467; that stretch reads QTGITLLALFLLLIVVGPCVI. Cysteine 465 carries S-palmitoyl cysteine; by host lipidation. Over 468–493 the chain is Cytoplasmic; sequence RQLQTLPSRLQHRSQPYSLLNYETNL.

The mature envelope protein (Env) consists of a trimer of SU-TM heterodimers attached by a labile interchain disulfide bond. Specific enzymatic cleavages in vivo yield mature proteins. Envelope glycoproteins are synthesized as an inactive precursor that is N-glycosylated and processed likely by host cell furin or by a furin-like protease in the Golgi to yield the mature SU and TM proteins. The cleavage site between SU and TM requires the minimal sequence [KR]-X-[KR]-R. In terms of processing, the CXXC motif is highly conserved across a broad range of retroviral envelope proteins. It is thought to participate in the formation of a labile disulfide bond possibly with the CX6CC motif present in the transmembrane protein. Isomerization of the intersubunit disulfide bond to an SU intrachain disulfide bond is thought to occur upon receptor recognition in order to allow membrane fusion. Post-translationally, the transmembrane protein is palmitoylated.

The protein localises to the virion membrane. The protein resides in the host cell membrane. In terms of biological role, the surface protein (SU) attaches the virus to the host cell by binding to its receptor. This interaction triggers the refolding of the transmembrane protein (TM) and is thought to activate its fusogenic potential by unmasking its fusion peptide. Fusion occurs at the host cell plasma membrane. Functionally, the transmembrane protein (TM) acts as a class I viral fusion protein. Under the current model, the protein has at least 3 conformational states: pre-fusion native state, pre-hairpin intermediate state, and post-fusion hairpin state. During viral and target cell membrane fusion, the coiled coil regions (heptad repeats) assume a trimer-of-hairpins structure, positioning the fusion peptide in close proximity to the C-terminal region of the ectodomain. The formation of this structure appears to drive apposition and subsequent fusion of viral and target cell membranes. Membranes fusion leads to delivery of the nucleocapsid into the cytoplasm. The protein is Envelope glycoprotein gp63 (env) of Human T-cell leukemia virus 3 (strain Pyl43) (HTLV-3).